We begin with the raw amino-acid sequence, 489 residues long: Cytochrome P450 monooxygenase tazI (489 aa).

A heme-binding site is contributed by Cys-433.

It belongs to the cytochrome P450 family. Heme serves as cofactor.

Its pathway is secondary metabolite biosynthesis. In terms of biological role, cytochrome P450 monooxygenase; part of the gene cluster that mediates the biosynthesis of azaterrilone A and other azaphilones, a class of fungal metabolites characterized by a highly oxygenated pyrano-quinone bicyclic core and exhibiting a broad range of bioactivities. The first step of the pathway begins with the non-reducing polyketide synthase tazA that assembles one acetyl-CoA starter unit, five malonyl-CoA units, and catalyzes a series of Claisen condensations, methylation, PT-mediated cyclization, and finally releases the first hexaketide precursor through the R-domain. The tazA product then undergoes reduction on its terminal ketone and the following pyran-ring formation by yet undetermined enzyme(s). Dehydration and enoyl reduction, possibly involving the trans-enoyl reductase tazE leads to the next intermediate. TazD is predicted as an acetyltransferase and might catalyze the acetylation steps leading to the synthesis of azaterrilone A. Azaterrilone A is not the final product of the taz pathway and both the highly reducing polyketide synthase tazB and the dual enzyme tazHJ catalyze late steps of the pathway, leading to the production of the 2 final stereoisomers that contain additional polyketide modification whose structures have still to be determined. The chain is Cytochrome P450 monooxygenase tazI from Aspergillus terreus (strain NIH 2624 / FGSC A1156).